The primary structure comprises 450 residues: MASAITQCSTSELTCSICTDYLTDPVTICCGHRFCSPCLCLLWEDTLTPNCCPVCREISQQMYFKRIIFAEKQVIPTRESVPCQLSSSAMLICRRHQEIKNLICETDRSLLCFLCSQSPRHATHKHYMTREADEYYRKKLLIQMKSIWKKKQKNQRNLNRETNIIGTWEVFINLRSMMISAEYPKVCQYLREEEQKHVESLAREGRIIFQQLKRSQTRMAKMGILLREMYEKLKEMSCKADVNLPQDLGDVMKRNEFLRLAMPQPVNPQLSAWTITGVSERLNFFRVYITLDRKICSNHKLLFEDLRHLQCSLDDTDMSCNPTSTQYTSSWGAQILSSGKHYWEVDVKDSCNWVIGLCREAWTKRNDMRLDSEGIFLLLCLKVDDHFSLFSTSPLLPHYIPRPQGWLGVFLDYECGIVSFVNVAQSSLICSFLSRIFYFPLRPFICHGSK.

Residues 15-56 (CSICTDYLTDPVTICCGHRFCSPCLCLLWEDTLTPNCCPVCR) form an RING-type zinc finger. A B box-type zinc finger spans residues 88–131 (SAMLICRRHQEIKNLICETDRSLLCFLCSQSPRHATHKHYMTRE). Positions 93, 96, 115, and 121 each coordinate Zn(2+). A B30.2/SPRY domain is found at 269–450 (QLSAWTITGV…LRPFICHGSK (182 aa)).

Belongs to the TRIM/RBCC family.

This Homo sapiens (Human) protein is Tripartite motif-containing protein 77 (TRIM77).